The following is a 431-amino-acid chain: MSEIVDIYAREILDSRGNPTLECEVFLESGAFGRAAVPSGASTGEREALELRDGDKGRYLGKGVLQAVDNVNNRIADELIGMEASDQVGIDQRMLEMDGTEFKSNLGANAILGVSLAVAKAAAEEAGLPLYKYIGGANARELPLPMMNIINGGAHADNNVDIQEFMIMPAGACCFAEALRMGAEIFHALKGVLKAKGYNTAVGDEGGFAPNLKSNEEALEVIMEAIVKAGYKPGDDVLLALDVASSELFDKEKGIYTLENEAQKEKTPAQMVDFYENLVNKYPIISIEDGMAENDWDGWKLMTDRLGKKIQIVGDDLFVTNPKILKEGIQKGIANSILIKLNQIGTLTETLEAIEMAKRAGYTTVISHRSGETEDTTLADLAVAVNAGQIKTGSLCRTDRVAKYNQLLRIEDELDTTAEFKGHNVFYNIKK.

Gln-163 serves as a coordination point for (2R)-2-phosphoglycerate. Glu-205 serves as the catalytic Proton donor. Residues Asp-242, Glu-288, and Asp-315 each coordinate Mg(2+). Residues Lys-340, Arg-369, Ser-370, and Lys-391 each contribute to the (2R)-2-phosphoglycerate site. Lys-340 serves as the catalytic Proton acceptor.

This sequence belongs to the enolase family. Requires Mg(2+) as cofactor.

Its subcellular location is the cytoplasm. It localises to the secreted. The protein resides in the cell surface. The catalysed reaction is (2R)-2-phosphoglycerate = phosphoenolpyruvate + H2O. It participates in carbohydrate degradation; glycolysis; pyruvate from D-glyceraldehyde 3-phosphate: step 4/5. In terms of biological role, catalyzes the reversible conversion of 2-phosphoglycerate (2-PG) into phosphoenolpyruvate (PEP). It is essential for the degradation of carbohydrates via glycolysis. The protein is Enolase of Trichlorobacter lovleyi (strain ATCC BAA-1151 / DSM 17278 / SZ) (Geobacter lovleyi).